Consider the following 337-residue polypeptide: Ornithine carbamoyltransferase (337 aa).

Carbamoyl phosphate-binding positions include S57–T60, Q84, R108, and H135–Q138. Residues N167, D231, and S235–M236 each bind L-ornithine. Carbamoyl phosphate is bound by residues C272–L273 and R317.

Belongs to the aspartate/ornithine carbamoyltransferase superfamily. OTCase family.

It localises to the cytoplasm. The enzyme catalyses carbamoyl phosphate + L-ornithine = L-citrulline + phosphate + H(+). The protein operates within amino-acid degradation; L-arginine degradation via ADI pathway; carbamoyl phosphate from L-arginine: step 2/2. In terms of biological role, reversibly catalyzes the transfer of the carbamoyl group from carbamoyl phosphate (CP) to the N(epsilon) atom of ornithine (ORN) to produce L-citrulline. This is Ornithine carbamoyltransferase from Streptococcus equi subsp. zooepidemicus (strain MGCS10565).